An 871-amino-acid polypeptide reads, in one-letter code: Alanine--tRNA ligase (871 aa).

4 residues coordinate Zn(2+): His561, His565, Cys665, and His669.

Belongs to the class-II aminoacyl-tRNA synthetase family. Requires Zn(2+) as cofactor.

The protein resides in the cytoplasm. The enzyme catalyses tRNA(Ala) + L-alanine + ATP = L-alanyl-tRNA(Ala) + AMP + diphosphate. Its function is as follows. Catalyzes the attachment of alanine to tRNA(Ala) in a two-step reaction: alanine is first activated by ATP to form Ala-AMP and then transferred to the acceptor end of tRNA(Ala). Also edits incorrectly charged Ser-tRNA(Ala) and Gly-tRNA(Ala) via its editing domain. This is Alanine--tRNA ligase from Dehalococcoides mccartyi (strain ATCC BAA-2266 / KCTC 15142 / 195) (Dehalococcoides ethenogenes (strain 195)).